The primary structure comprises 419 residues: Dual specificity mitogen-activated protein kinase kinase 7 (419 aa).

Alanine 2 carries the N-acetylalanine modification. Residues 2–30 adopt a coiled-coil conformation; that stretch reads AASSLEQKLSRLEAKLKQENREARRRIDL. Residues 18-30 are compositionally biased toward basic and acidic residues; that stretch reads KQENREARRRIDL. The disordered stretch occupies residues 18–77; it reads KQENREARRRIDLNLDISPQRPRPTLQLPLANDGGSRSPSSESSPQHPTPPSRPRHMLGL. Residues 36–63 are compositionally biased toward low complexity; that stretch reads PQRPRPTLQLPLANDGGSRSPSSESSPQ. The tract at residues 37-57 is d Domain; sequence QRPRPTLQLPLANDGGSRSPS. In terms of domain architecture, Protein kinase spans 120–380; the sequence is LENLGEMGSG…YNKLLEHSFI (261 aa). Residues 126–134 and lysine 149 contribute to the ATP site; that span reads MGSGTCGQV. Catalysis depends on aspartate 243, which acts as the Proton acceptor. Serine 271 bears the Phosphoserine; by MAP3K mark. Position 275 is a phosphothreonine; by MAP3K (threonine 275). The DVD domain stretch occupies residues 377 to 400; that stretch reads HSFIKHYETLEVDVASWFKDVMAK. Serine 411 carries the phosphoserine modification.

Belongs to the protein kinase superfamily. STE Ser/Thr protein kinase family. MAP kinase kinase subfamily. Interacts with VRK2. Interacts (via its D domain) with its substrates MAPK8/JNK1, MAPK9/JNK2 and MAPK10/JNK3. Interacts (via its DVD domain) with MAP3Ks activators like MAP3K5/ASK1 and MAP3K1/MEKK1. Interacts with MAPK8IP1/JIP1, MAPK8IP2/JIP2 and MAPK8IP3/JIP3 scaffold proteins. Interacts with RASSF7, the interaction promotes phosphorylation. Found in a complex with SH3RF1, RAC1, MAP3K11/MLK3, MAPK8IP1/JIP1 and MAPK8/JNK1. Found in a complex with SH3RF1, RAC2, MAP3K7/TAK1, MAPK8IP1/JIP1, MAPK8/JNK1 and MAPK9/JNK2. The cofactor is Mg(2+). In terms of processing, activated by phosphorylation on Ser-271 and Thr-275 by MAP kinase kinase kinases (MAP3Ks).

The protein localises to the nucleus. It is found in the cytoplasm. The catalysed reaction is L-seryl-[protein] + ATP = O-phospho-L-seryl-[protein] + ADP + H(+). The enzyme catalyses L-threonyl-[protein] + ATP = O-phospho-L-threonyl-[protein] + ADP + H(+). It carries out the reaction L-tyrosyl-[protein] + ATP = O-phospho-L-tyrosyl-[protein] + ADP + H(+). With respect to regulation, activated by phosphorylation by specific MAP kinase kinase kinases such as MAP3K1/MEKK1, MAP3K3/MEKK3, MAP3K11/MLK3 and MAP3K12/DLK. In terms of biological role, dual specificity protein kinase which acts as an essential component of the MAP kinase signal transduction pathway. Essential component of the stress-activated protein kinase/c-Jun N-terminal kinase (SAP/JNK) signaling pathway. With MAP2K4/MKK4, is the one of the only known kinase to directly activate the stress-activated protein kinase/c-Jun N-terminal kinases MAPK8/JNK1, MAPK9/JNK2 and MAPK10/JNK3. MAP2K4/MKK4 and MAP2K7/MKK7 both activate the JNKs by phosphorylation, but they differ in their preference for the phosphorylation site in the Thr-Pro-Tyr motif. MAP2K4/MKK4 shows preference for phosphorylation of the Tyr residue and MAP2K7/MKK7 for the Thr residue. The monophosphorylation of JNKs on the Thr residue is sufficient to increase JNK activity indicating that MAP2K7/MKK7 is important to trigger JNK activity, while the additional phosphorylation of the Tyr residue by MAP2K4/MKK4 ensures optimal JNK activation. Has a specific role in JNK signal transduction pathway activated by pro-inflammatory cytokines. The MKK/JNK signaling pathway is also involved in mitochondrial death signaling pathway, including the release cytochrome c, leading to apoptosis. Part of a non-canonical MAPK signaling pathway, composed of the upstream MAP3K12 kinase and downstream MAP kinases MAPK1/ERK2 and MAPK3/ERK1, that enhances the AP-1-mediated transcription of APP in response to APOE. The polypeptide is Dual specificity mitogen-activated protein kinase kinase 7 (Rattus norvegicus (Rat)).